A 468-amino-acid polypeptide reads, in one-letter code: E3 ubiquitin-protein ligase RGLG2 (468 aa).

The interval 1-89 (MGTGNSKENW…PSQSYGSDNK (89 aa)) is disordered. Residue glycine 2 is the site of N-myristoyl glycine attachment. A compositionally biased stretch (low complexity) spans 12 to 45 (QSSFRSTSASSASPSSSSWASQQSYPQYGAESYN). A compositionally biased stretch (pro residues) spans 46–65 (YPPPPSYAQPPEYTQPPPPL). Low complexity predominate over residues 66–84 (YSTQPYSAPSYSAPPSQSY). Residues 122–342 (NLIVGIDFTK…KETEFALSAL (221 aa)) form the VWFA domain. A disordered region spans residues 369-416 (FPLPPPMRGGSSSYNSPKPSRLPSFKPSVPPHPTEGYHVRSSPVPPPT). Residues 425-458 (CPICLSNPKDMAFGCGHQTCCECGPDLQMCPICR) form an RING-type zinc finger.

Interacts with the heterodimer UBC35/UEV1B, UBC35 alone, PIN1, but not with UCB2, UCB9, UEV1B or UEV1C alone. Interacts with ERF053. N-myristoylated. In terms of tissue distribution, ubiquitously expressed.

It is found in the cell membrane. It localises to the nucleus. It catalyses the reaction S-ubiquitinyl-[E2 ubiquitin-conjugating enzyme]-L-cysteine + [acceptor protein]-L-lysine = [E2 ubiquitin-conjugating enzyme]-L-cysteine + N(6)-ubiquitinyl-[acceptor protein]-L-lysine.. Functionally, E3 ubiquitin-protein ligase that mediates the formation of 'Lys-63'-linked ubiquitin chains. Regulates apical dominance by acting on the auxin transport proteins abundance. Mediates ubiquitination and subsequent proteasomal degradation of ERF053 in response to drought stress. Acts as a negative regulator of drought stress response. This is E3 ubiquitin-protein ligase RGLG2 from Arabidopsis thaliana (Mouse-ear cress).